The following is a 191-amino-acid chain: MGKKLVMAQKRGETRALCLGVAMVMCAVITYYILGTTMLPLYQKSVWTQESLCRLIETNIRDQEELEGKKVPQYPCLWVNVSAVGKWAVLYHTEETRDRNQQCSYIPGSLDNYQMALADVEKVRAKFHERQVFYCFSTTQENETSVLYQRLYGPQALLASLFWPTFLLTGGLLIIAMVKINRSLSILAAQK.

The Cytoplasmic segment spans residues 1–15 (MGKKLVMAQKRGETR). The chain crosses the membrane as a helical span at residues 16–36 (ALCLGVAMVMCAVITYYILGT). Residues 37 to 157 (TMLPLYQKSV…YQRLYGPQAL (121 aa)) lie on the Extracellular side of the membrane. Residues Asn-80 and Asn-142 are each glycosylated (N-linked (GlcNAc...) asparagine). The chain crosses the membrane as a helical span at residues 158-178 (LASLFWPTFLLTGGLLIIAMV). Topologically, residues 179 to 191 (KINRSLSILAAQK) are cytoplasmic.

The protein belongs to the KCNMB (TC 8.A.14.1) family. KCNMB1 subfamily. In terms of assembly, interacts with KCNMA1 tetramer. There are probably 4 molecules of KCMNB1 per KCNMA1 tetramer. N-glycosylated.

Its subcellular location is the membrane. Regulatory subunit of the calcium activated potassium KCNMA1 (maxiK) channel. Modulates the calcium sensitivity and gating kinetics of KCNMA1, thereby contributing to KCNMA1 channel diversity. Increases the apparent Ca(2+)/voltage sensitivity of the KCNMA1 channel. It also modifies KCNMA1 channel kinetics and alters its pharmacological properties. It slows down the activation and the deactivation kinetics of the channel. Acts as a negative regulator of smooth muscle contraction by enhancing the calcium sensitivity to KCNMA1. Its presence is also a requirement for internal binding of the KCNMA1 channel opener dehydrosoyasaponin I (DHS-1) triterpene glycoside and for external binding of the agonist hormone 17-beta-estradiol (E2). Increases the binding activity of charybdotoxin (CTX) toxin to KCNMA1 peptide blocker by increasing the CTX association rate and decreasing the dissociation rate. This chain is Calcium-activated potassium channel subunit beta-1 (KCNMB1), found in Oryctolagus cuniculus (Rabbit).